A 447-amino-acid chain; its full sequence is Tubulin beta-2 chain (447 aa).

8 residues coordinate GTP: Gln-11, Glu-69, Ser-138, Gly-142, Thr-143, Gly-144, Asn-204, and Asn-226. Glu-69 serves as a coordination point for Mg(2+). Positions 419–447 are disordered; it reads VSEYQQYQDATADDEGEYEDEEEEADLQD. Over residues 429 to 447 the composition is skewed to acidic residues; that stretch reads TADDEGEYEDEEEEADLQD.

The protein belongs to the tubulin family. As to quaternary structure, dimer of alpha and beta chains. A typical microtubule is a hollow water-filled tube with an outer diameter of 25 nm and an inner diameter of 15 nM. Alpha-beta heterodimers associate head-to-tail to form protofilaments running lengthwise along the microtubule wall with the beta-tubulin subunit facing the microtubule plus end conferring a structural polarity. Microtubules usually have 13 protofilaments but different protofilament numbers can be found in some organisms and specialized cells. It depends on Mg(2+) as a cofactor. Expressed in leaf sheaths and suspension cultured cells.

The protein resides in the cytoplasm. The protein localises to the cytoskeleton. Tubulin is the major constituent of microtubules, a cylinder consisting of laterally associated linear protofilaments composed of alpha- and beta-tubulin heterodimers. Microtubules grow by the addition of GTP-tubulin dimers to the microtubule end, where a stabilizing cap forms. Below the cap, tubulin dimers are in GDP-bound state, owing to GTPase activity of alpha-tubulin. The polypeptide is Tubulin beta-2 chain (TUBB2) (Oryza sativa subsp. japonica (Rice)).